Reading from the N-terminus, the 129-residue chain is Small ribosomal subunit protein uS11 (129 aa).

Belongs to the universal ribosomal protein uS11 family. As to quaternary structure, part of the 30S ribosomal subunit. Interacts with proteins S7 and S18. Binds to IF-3.

Its function is as follows. Located on the platform of the 30S subunit, it bridges several disparate RNA helices of the 16S rRNA. Forms part of the Shine-Dalgarno cleft in the 70S ribosome. The protein is Small ribosomal subunit protein uS11 of Pseudomonas putida (strain GB-1).